The primary structure comprises 676 residues: UvrABC system protein B (676 aa).

In terms of domain architecture, Helicase ATP-binding spans 26–414; the sequence is EGLDAGLAHQ…SAGEIADQVV (389 aa). An ATP-binding site is contributed by 39-46; it reads GVTGSGKT. The short motif at 92–115 is the Beta-hairpin element; it reads YYDYYQPEAYVPTTDTFIEKDASV. Residues 432–598 form the Helicase C-terminal domain; sequence QVDDLLSEIR…ALKRNIKDIM (167 aa). A UVR domain is found at 636–671; that stretch reads EKEISRLEAAMYQHAQDLEFELAAEKRDEIEKLRAQ.

This sequence belongs to the UvrB family. As to quaternary structure, forms a heterotetramer with UvrA during the search for lesions. Interacts with UvrC in an incision complex.

Its subcellular location is the cytoplasm. The UvrABC repair system catalyzes the recognition and processing of DNA lesions. A damage recognition complex composed of 2 UvrA and 2 UvrB subunits scans DNA for abnormalities. Upon binding of the UvrA(2)B(2) complex to a putative damaged site, the DNA wraps around one UvrB monomer. DNA wrap is dependent on ATP binding by UvrB and probably causes local melting of the DNA helix, facilitating insertion of UvrB beta-hairpin between the DNA strands. Then UvrB probes one DNA strand for the presence of a lesion. If a lesion is found the UvrA subunits dissociate and the UvrB-DNA preincision complex is formed. This complex is subsequently bound by UvrC and the second UvrB is released. If no lesion is found, the DNA wraps around the other UvrB subunit that will check the other stand for damage. This Vibrio parahaemolyticus serotype O3:K6 (strain RIMD 2210633) protein is UvrABC system protein B.